The following is a 144-amino-acid chain: Transcriptional regulator SlyA (144 aa).

Positions 2 to 135 constitute an HTH marR-type domain; sequence ESSLGSDLAR…LNNIIAKLER (134 aa). The segment at residues 49-72 is a DNA-binding region (H-T-H motif); it reads QIQLAKAIGIEQPSLVRTLDQLES.

The protein belongs to the SlyA family. As to quaternary structure, homodimer.

Its function is as follows. Transcription regulator that can specifically activate or repress expression of target genes. The protein is Transcriptional regulator SlyA of Blochmanniella floridana.